The primary structure comprises 201 residues: Large ribosomal subunit protein eL15A (201 aa).

A disordered region spans residues 161 to 182; that stretch reads SRGLTSIGKKSRGIGKGHRFNN. Residues 169 to 179 are compositionally biased toward basic residues; that stretch reads KKSRGIGKGHR.

It belongs to the eukaryotic ribosomal protein eL15 family. Component of the large ribosomal subunit (LSU). Mature yeast ribosomes consist of a small (40S) and a large (60S) subunit. The 40S small subunit contains 1 molecule of ribosomal RNA (18S rRNA) and at least 33 different proteins. The large 60S subunit contains 3 rRNA molecules (25S, 5.8S and 5S rRNA) and at least 46 different proteins.

The protein localises to the cytoplasm. Its subcellular location is the nucleus. It localises to the nucleolus. In terms of biological role, component of the ribosome, a large ribonucleoprotein complex responsible for the synthesis of proteins in the cell. The small ribosomal subunit (SSU) binds messenger RNAs (mRNAs) and translates the encoded message by selecting cognate aminoacyl-transfer RNA (tRNA) molecules. The large subunit (LSU) contains the ribosomal catalytic site termed the peptidyl transferase center (PTC), which catalyzes the formation of peptide bonds, thereby polymerizing the amino acids delivered by tRNAs into a polypeptide chain. The nascent polypeptides leave the ribosome through a tunnel in the LSU and interact with protein factors that function in enzymatic processing, targeting, and the membrane insertion of nascent chains at the exit of the ribosomal tunnel. The sequence is that of Large ribosomal subunit protein eL15A (rpl15) from Schizosaccharomyces pombe (strain 972 / ATCC 24843) (Fission yeast).